We begin with the raw amino-acid sequence, 90 residues long: U7-theraphotoxin-Hhn1e (90 aa).

Positions 1 to 19 (MKTAIFTVVLALAVFAVLS) are cleaved as a signal peptide. Positions 20–50 (FGWEANEKALSEEFTELIHEKEAASETEARE) are excised as a propeptide. Cystine bridges form between cysteine 51–cysteine 65, cysteine 58–cysteine 70, and cysteine 64–cysteine 81.

Belongs to the neurotoxin 10 (Hwtx-1) family. 13 (Hntx-13) subfamily. Expressed by the venom gland.

The protein resides in the secreted. Its function is as follows. Ion channel inhibitor. The polypeptide is U7-theraphotoxin-Hhn1e (Cyriopagopus hainanus (Chinese bird spider)).